A 75-amino-acid polypeptide reads, in one-letter code: Kappa-scoloptoxin(03)-Ssm1e (75 aa).

The first 23 residues, Met-1–Ser-23, serve as a signal peptide directing secretion.

Belongs to the scoloptoxin-03 family. Contains 3 disulfide bonds. Expressed by the venom gland.

The protein localises to the secreted. Its function is as follows. Inhibits voltage-gated potassium channels. In Scolopendra mutilans (Chinese red-headed centipede), this protein is Kappa-scoloptoxin(03)-Ssm1e.